The sequence spans 315 residues: Homoserine kinase (315 aa).

97–107 is a binding site for ATP; sequence PPARGLGSSAT.

It belongs to the GHMP kinase family. Homoserine kinase subfamily.

Its subcellular location is the cytoplasm. The catalysed reaction is L-homoserine + ATP = O-phospho-L-homoserine + ADP + H(+). It functions in the pathway amino-acid biosynthesis; L-threonine biosynthesis; L-threonine from L-aspartate: step 4/5. Functionally, catalyzes the ATP-dependent phosphorylation of L-homoserine to L-homoserine phosphate. The chain is Homoserine kinase from Synechococcus sp. (strain CC9902).